Here is a 1717-residue protein sequence, read N- to C-terminus: DNA-directed RNA polymerase I subunit RPA1 (1717 aa).

Cys64, Cys67, Cys74, His77, Cys104, and Cys107 together coordinate Zn(2+). Positions 110–201 (LTCPRAAIYL…VAQFWKTHMA (92 aa)) are clamp. Positions 205 and 208 each coordinate Zn(2+). Residues 327 to 433 (FTNGQTVNLQ…IRQILEKKEG (107 aa)) are clamp. The interval 410–423 (DSEMDKLMLEKYPG) is rudder. Positions 431, 436, and 443 each coordinate DNA. The interval 475–549 (YPQPVTPWNV…QGTKVVCRHV (75 aa)) is involved in RRN3 binding to Pol I complex. Arg559 contacts RNA. The Mg(2+) site is built by Asp595, Asp597, and Asp599. Asp599 lines the RNA pocket. The interval 812–890 (KPNADVVRQR…NEINKACMPL (79 aa)) is funnel. The interval 967-1008 (RPPEFFFHCMAGREGLVDTAVKTSRSGYLQRCIIKHLEGLVI) is bridging helix. The interval 1067-1162 (ADPQKVLGHI…SLSVWRPDIY (96 aa)) is mediates the interaction with TOP2A. Positions 1214–1255 (PGEAVGLLAAQSIGEPSTQMTLNTFHFAGRGEMNVTLGIPRL) are trigger loop. A DNA-binding site is contributed by Arg1256. Residues 1372–1493 (RNVNSRRATQ…RRHSRPQGAE (122 aa)) are disordered. Basic and acidic residues predominate over residues 1380–1397 (TQKDLNDTEDSGRSQREE). Residue Ser1393 is modified to Phosphoserine. Composition is skewed to acidic residues over residues 1398-1419 (ERDE…DADA) and 1429-1450 (EEEV…EVQE). Residues 1452 to 1464 (GNIKGDGVHQGHE) show a composition bias toward basic and acidic residues. Over residues 1465–1477 (PDEEEHLGLEEEE) the composition is skewed to acidic residues.

Belongs to the RNA polymerase beta' chain family. As to quaternary structure, component of the RNA polymerase I (Pol I) complex consisting of 13 subunits: a ten-subunit catalytic core composed of POLR1A/RPA1, POLR1B/RPA2, POLR1C/RPAC1, POLR1D/RPAC2, POLR1H/RPA12, POLR2E/RPABC1, POLR2F/RPABC2, POLR2H/RPABC3, POLR2K/RPABC4 and POLR2L/RPABC5; a mobile stalk subunit POLR1F/RPA43 protruding from the core and additional subunits homologous to general transcription factors POLR1E/RPA49 and POLR1G/RPA34. Part of Pol I pre-initiation complex (PIC), in which Pol I core assembles with RRN3 and promoter-bound UTBF and SL1/TIF-IB complex. Interacts (via dock II domain) with TOP2A; this interaction may assist Pol I transcription initiation by releasing supercoils occurring during DNA unwinding. Interacts with CAVIN1; this interaction induces the dissociation of Pol I complex paused at rDNA terminator sequences. Interacts with MYO1C. Interacts with ERBB2. Interacts with DDX11. Interacts with RECQL5. It depends on Mg(2+) as a cofactor. Post-translationally, phosphorylated.

The protein resides in the nucleus. It localises to the nucleolus. It is found in the chromosome. It carries out the reaction RNA(n) + a ribonucleoside 5'-triphosphate = RNA(n+1) + diphosphate. Catalytic core component of RNA polymerase I (Pol I), a DNA-dependent RNA polymerase which synthesizes ribosomal RNA precursors using the four ribonucleoside triphosphates as substrates. Transcribes 47S pre-rRNAs from multicopy rRNA gene clusters, giving rise to 5.8S, 18S and 28S ribosomal RNAs. Pol I-mediated transcription cycle proceeds through transcription initiation, transcription elongation and transcription termination stages. During transcription initiation, Pol I pre-initiation complex (PIC) is recruited by the selectivity factor 1 (SL1/TIF-IB) complex bound to the core promoter that precedes an rDNA repeat unit. The PIC assembly bends the promoter favoring the formation of the transcription bubble and promoter escape. Once the polymerase has escaped from the promoter it enters the elongation phase during which RNA is actively polymerized, based on complementarity with the template DNA strand. Highly processive, assembles in structures referred to as 'Miller trees' where many elongating Pol I complexes queue and transcribe the same rDNA coding regions. At terminator sequences downstream of the rDNA gene, PTRF interacts with Pol I and halts Pol I transcription leading to the release of the RNA transcript and polymerase from the DNA. Forms Pol I active center together with the second largest subunit POLR1B/RPA2. Appends one nucleotide at a time to the 3' end of the nascent RNA, with POLR1A/RPA1 contributing a Mg(2+)-coordinating DxDGD motif, and POLR1B/RPA2 participating in the coordination of a second Mg(2+) ion and providing lysine residues believed to facilitate Watson-Crick base pairing between the incoming nucleotide and the template base. Typically, Mg(2+) ions direct a 5' nucleoside triphosphate to form a phosphodiester bond with the 3' hydroxyl of the preceding nucleotide of the nascent RNA, with the elimination of pyrophosphate. Has proofreading activity: Pauses and backtracks to allow the cleavage of a missincorporated nucleotide via POLR1H/RPA12. High Pol I processivity is associated with decreased transcription fidelity. This chain is DNA-directed RNA polymerase I subunit RPA1, found in Mus musculus (Mouse).